Here is a 235-residue protein sequence, read N- to C-terminus: Orotidine 5'-phosphate decarboxylase (235 aa).

Substrate contacts are provided by residues Asp-16, Lys-38, 65–74 (DLKLHDIGNT), Thr-120, Arg-181, Gln-190, Gly-210, and Arg-211. Lys-67 acts as the Proton donor in catalysis.

It belongs to the OMP decarboxylase family. Type 1 subfamily. In terms of assembly, homodimer.

The catalysed reaction is orotidine 5'-phosphate + H(+) = UMP + CO2. The protein operates within pyrimidine metabolism; UMP biosynthesis via de novo pathway; UMP from orotate: step 2/2. Functionally, catalyzes the decarboxylation of orotidine 5'-monophosphate (OMP) to uridine 5'-monophosphate (UMP). This Rhodopseudomonas palustris (strain BisA53) protein is Orotidine 5'-phosphate decarboxylase.